Consider the following 861-residue polypeptide: DNA mismatch repair protein MutS (861 aa).

Residue 618–625 (GPNMGGKS) participates in ATP binding.

The protein belongs to the DNA mismatch repair MutS family.

In terms of biological role, this protein is involved in the repair of mismatches in DNA. It is possible that it carries out the mismatch recognition step. This protein has a weak ATPase activity. The sequence is that of DNA mismatch repair protein MutS from Shewanella frigidimarina (strain NCIMB 400).